The following is a 349-amino-acid chain: Phosphoribosylformylglycinamidine cyclo-ligase (349 aa).

Belongs to the AIR synthase family.

It localises to the cytoplasm. It carries out the reaction 2-formamido-N(1)-(5-O-phospho-beta-D-ribosyl)acetamidine + ATP = 5-amino-1-(5-phospho-beta-D-ribosyl)imidazole + ADP + phosphate + H(+). It functions in the pathway purine metabolism; IMP biosynthesis via de novo pathway; 5-amino-1-(5-phospho-D-ribosyl)imidazole from N(2)-formyl-N(1)-(5-phospho-D-ribosyl)glycinamide: step 2/2. The protein is Phosphoribosylformylglycinamidine cyclo-ligase of Methanococcus maripaludis (strain C5 / ATCC BAA-1333).